A 299-amino-acid polypeptide reads, in one-letter code: Oxygen-dependent coproporphyrinogen-III oxidase (299 aa).

Position 92 (Ser-92) interacts with substrate. His-96 and His-106 together coordinate a divalent metal cation. His-106 functions as the Proton donor in the catalytic mechanism. Residue 108 to 110 (NVR) coordinates substrate. Residues His-145 and His-175 each contribute to the a divalent metal cation site. Residues 240–275 (YVEFNLVWDRGTLFGLQTGGRTESILMSMPPLVRWE) form an important for dimerization region. 258 to 260 (GGR) contacts substrate.

The protein belongs to the aerobic coproporphyrinogen-III oxidase family. In terms of assembly, homodimer. Requires a divalent metal cation as cofactor.

The protein localises to the cytoplasm. It catalyses the reaction coproporphyrinogen III + O2 + 2 H(+) = protoporphyrinogen IX + 2 CO2 + 2 H2O. It functions in the pathway porphyrin-containing compound metabolism; protoporphyrin-IX biosynthesis; protoporphyrinogen-IX from coproporphyrinogen-III (O2 route): step 1/1. Its function is as follows. Involved in the heme biosynthesis. Catalyzes the aerobic oxidative decarboxylation of propionate groups of rings A and B of coproporphyrinogen-III to yield the vinyl groups in protoporphyrinogen-IX. This is Oxygen-dependent coproporphyrinogen-III oxidase from Salmonella enteritidis PT4 (strain P125109).